Consider the following 606-residue polypeptide: WD repeat-containing protein 1 (606 aa).

13 WD repeats span residues 4 to 45 (EIKK…LRNI), 48 to 87 (PAVA…IWDT), 93 to 135 (ILKY…LWDT), 138 to 176 (SVGE…FFEG), 180 to 218 (KFKF…IYDG), 224 to 263 (VCAL…IWDV), 270 to 306 (STFP…YLDK), 311 to 351 (KPLR…YWDS), 358 to 408 (SFSG…KLDV), 432 to 474 (LKDQ…VYSI), 480 to 518 (KDEG…VFSV), 523 to 561 (SENN…VWTL), and 566 to 604 (TKVK…EWTI). N6-acetyllysine is present on residues K28, K81, K95, and K115. A Phosphotyrosine modification is found at Y238. An N6-acetyllysine modification is found at K480.

Belongs to the WD repeat AIP1 family.

The protein localises to the cytoplasm. The protein resides in the cytoskeleton. It is found in the cell projection. Its subcellular location is the podosome. Its function is as follows. Induces disassembly of actin filaments in conjunction with ADF/cofilin family proteins. Enhances cofilin-mediated actin severing. Involved in cytokinesis. Involved in chemotactic cell migration by restricting lamellipodial membrane protrusions. Involved in myocardium sarcomere organization. Required for cardiomyocyte growth and maintenance. Involved in megakaryocyte maturation and platelet shedding. Required for the establishment of planar cell polarity (PCP) during follicular epithelium development and for cell shape changes during PCP; the function seems to implicate cooperation with CFL1 and/or DSTN/ADF. Involved in the generation/maintenance of cortical tension. Involved in assembly and maintenance of epithelial apical cell junctions and plays a role in the organization of the perijunctional actomyosin belt. The polypeptide is WD repeat-containing protein 1 (Wdr1) (Rattus norvegicus (Rat)).